A 277-amino-acid polypeptide reads, in one-letter code: Photosystem I assembly factor PSA3, chloroplastic (277 aa).

Residues 1 to 45 constitute a chloroplast transit peptide; the sequence is MVVVTHISTSFHQISPSFFHLRLRNPSTTSSSRPKLDGGFALSIR.

As to quaternary structure, interacts with PYG7.

Its subcellular location is the plastid. The protein localises to the chloroplast. It localises to the chloroplast thylakoid membrane. Functionally, nuclear genome-encoded factor required for the accumulation of photosystem I (PSI). Functions as a PSI biogenesis factor. Cooperates with PYG7 to promote the stable assembly of PSI in the thylakoid membrane. May target primarily the PsaC subunit. Does not seem to be required for the expression of chloroplast genes encoding PSI subunits. This chain is Photosystem I assembly factor PSA3, chloroplastic, found in Arabidopsis thaliana (Mouse-ear cress).